The sequence spans 437 residues: Citrate synthase (437 aa).

Active-site residues include H316 and D372.

The protein belongs to the citrate synthase family. As to quaternary structure, homohexamer.

It catalyses the reaction oxaloacetate + acetyl-CoA + H2O = citrate + CoA + H(+). It functions in the pathway carbohydrate metabolism; tricarboxylic acid cycle; isocitrate from oxaloacetate: step 1/2. Its activity is regulated as follows. Weakly inhibited by ATP (apparent Ki = 10 mm). The chain is Citrate synthase (gltA) from Corynebacterium glutamicum (strain ATCC 13032 / DSM 20300 / JCM 1318 / BCRC 11384 / CCUG 27702 / LMG 3730 / NBRC 12168 / NCIMB 10025 / NRRL B-2784 / 534).